The primary structure comprises 105 residues: Large ribosomal subunit protein uL24 (105 aa).

This sequence belongs to the universal ribosomal protein uL24 family. Part of the 50S ribosomal subunit.

One of two assembly initiator proteins, it binds directly to the 5'-end of the 23S rRNA, where it nucleates assembly of the 50S subunit. Its function is as follows. One of the proteins that surrounds the polypeptide exit tunnel on the outside of the subunit. The protein is Large ribosomal subunit protein uL24 of Thermotoga petrophila (strain ATCC BAA-488 / DSM 13995 / JCM 10881 / RKU-1).